A 404-amino-acid chain; its full sequence is Phosphopentomutase (404 aa).

Mn(2+) contacts are provided by aspartate 10, aspartate 303, histidine 308, aspartate 344, histidine 345, and histidine 356.

Belongs to the phosphopentomutase family. The cofactor is Mn(2+).

Its subcellular location is the cytoplasm. The enzyme catalyses 2-deoxy-alpha-D-ribose 1-phosphate = 2-deoxy-D-ribose 5-phosphate. The catalysed reaction is alpha-D-ribose 1-phosphate = D-ribose 5-phosphate. It participates in carbohydrate degradation; 2-deoxy-D-ribose 1-phosphate degradation; D-glyceraldehyde 3-phosphate and acetaldehyde from 2-deoxy-alpha-D-ribose 1-phosphate: step 1/2. In terms of biological role, isomerase that catalyzes the conversion of deoxy-ribose 1-phosphate (dRib-1-P) and ribose 1-phosphate (Rib-1-P) to deoxy-ribose 5-phosphate (dRib-5-P) and ribose 5-phosphate (Rib-5-P), respectively. This Shewanella sp. (strain MR-7) protein is Phosphopentomutase.